Consider the following 486-residue polypeptide: MSNNFKDDFEKNRQSIDTNSHQDHTEDVEKDQSELEHQDTIENTEQQFPPRNAQRRKRRRDLATNHNKQVHNESQTSEDNVQNEAGTIDDRQVESSHSTESQEPSHQDSTPQHEEEYYNKNAFAMDKSHPEPIEDNDKHETIKEAENNTEHSTVSDKSEAEQSQQPKPYFATGANQANTSKDKHDDVTVKQDKDESKDHHSGKKGAAIGAGTAGVAGAAGAMGVSKAKKHSNDAQNKSNSDKSNNSTEDKVSQDKSKDHHNGKKGAAIGAGTAGLAGGAASKSASAASKPHASNNASQNHDEHDNHDRDKERKKGGMAKVLLPLIAAVLIIGALAIFGGMALNNHNNGTKENKIANTNKNNADESKDKDTSKDASKDKSKSTDSDKSKEDQDKATKDESDNDQNNANQANNQAQNNQNQQQANQNQQQQQQRQGGGQRHTVNGQENLYRIAIQYYGSGSPENVEKIRRANGLSGNNIRNGQQIVIP.

A compositionally biased stretch (basic and acidic residues) spans 1–40 (MSNNFKDDFEKNRQSIDTNSHQDHTEDVEKDQSELEHQDT). The segment at 1 to 314 (MSNNFKDDFE…NHDRDKERKK (314 aa)) is disordered. At 2-204 (SNNFKDDFEK…ESKDHHSGKK (203 aa)) the chain is on the extracellular side. The elastin-binding stretch occupies residues 14 to 34 (QSIDTNSHQDHTEDVEKDQSE). The span at 64–85 (TNHNKQVHNESQTSEDNVQNEA) shows a compositional bias: polar residues. 3 stretches are compositionally biased toward basic and acidic residues: residues 103-118 (EPSHQDSTPQHEEEYY), 126-160 (DKSHPEPIEDNDKHETIKEAENNTEHSTVSDKSEA), and 180-199 (SKDKHDDVTVKQDKDESKDH). 2 stretches are compositionally biased toward low complexity: residues 204–225 (KGAAIGAGTAGVAGAAGAMGVS) and 233–246 (DAQNKSNSDKSNNS). The helical transmembrane segment at 205–225 (GAAIGAGTAGVAGAAGAMGVS) threads the bilayer. The Cytoplasmic segment spans residues 226–319 (KAKKHSNDAQ…KERKKGGMAK (94 aa)). Basic and acidic residues predominate over residues 247 to 259 (TEDKVSQDKSKDH). Residues 278 to 297 (GAASKSASAASKPHASNNAS) are compositionally biased toward low complexity. Residues 299–314 (NHDEHDNHDRDKERKK) show a composition bias toward basic and acidic residues. The chain crosses the membrane as a helical span at residues 320 to 340 (VLLPLIAAVLIIGALAIFGGM). Topologically, residues 341–486 (ALNNHNNGTK…IRNGQQIVIP (146 aa)) are extracellular. The disordered stretch occupies residues 351–440 (ENKIANTNKN…QRQGGGQRHT (90 aa)). Residues 361–398 (NADESKDKDTSKDASKDKSKSTDSDKSKEDQDKATKDE) show a composition bias toward basic and acidic residues. The segment covering 403–431 (QNNANQANNQAQNNQNQQQANQNQQQQQQ) has biased composition (low complexity). The LysM domain occupies 437–485 (QRHTVNGQENLYRIAIQYYGSGSPENVEKIRRANGLSGNNIRNGQQIVI).

The protein resides in the cell membrane. Its function is as follows. Promotes binding of soluble elastin peptides and tropoelastin to S.aureus cells although it is not able to promote bacterial adherence to immobilized elastin and, therefore, is not a microbial surface component recognizing adhesive matrix molecule (MSCRAMM). In Staphylococcus aureus (strain MSSA476), this protein is Elastin-binding protein EbpS (ebpS).